We begin with the raw amino-acid sequence, 635 residues long: MERWSINESAKIYNLPNWGADLFSINKKGNVCVHPSPTSKHSIDLRALVDDLIKRKIKPPILLRFMDVLQGRIASINRVFKNAIDENDYPATYQTFYPIKVNQQRQVVEAIAKFGKRYNIGLEVGSKPELVIGISFATGNGIPIICNGYKDTEYIETVLYATKIGYDITIVVEKMFELEKIIALSKKTGIKPKLGIRVKLSSKGTGKWATSGGEDAKFGLRMSEIIAAIGLLEQNDLLDRVKLLHFHIGSQITKIDKIKSALIEGTRIYAEMRKLGVGIRYVDIGGGLGVDYDGSKSSYFSSVNYSIEEYANDVIYQIKNICEDAGVECPNIISESGRATAAHYSVLVTNLLNTNTSNAMPDFEETLNGTEKLAPTVKKLVDIYKSIDRYSLREDYHDTVQLIQEAVSLFNLGYLTLNERAMAEWLHGKILRKINGIVEKIKPIPEELQNFQLSLRQTYFANFSLFQSIPDSWAIDQLFPIVPIQRLNQKPDVMASIADITCDSDGEITSFVGENGRTKYLPLHKMRKDEDYFVGFFLIGAYQEILGDMHNLFGDTNAVHVTFNKKTGYKIDTVIHGDATWESLKYVQYKGPEILKHVRDTLEKDVALRKVTIEESSHFLELLDRTLLGYTYLGE.

An N6-(pyridoxal phosphate)lysine modification is found at K100. A substrate-binding site is contributed by 282-292; that stretch reads VDIGGGLGVDY.

The protein belongs to the Orn/Lys/Arg decarboxylase class-II family. SpeA subfamily. It depends on Mg(2+) as a cofactor. Requires pyridoxal 5'-phosphate as cofactor.

It catalyses the reaction L-arginine + H(+) = agmatine + CO2. It functions in the pathway amine and polyamine biosynthesis; agmatine biosynthesis; agmatine from L-arginine: step 1/1. Functionally, catalyzes the biosynthesis of agmatine from arginine. This Geobacter sulfurreducens (strain ATCC 51573 / DSM 12127 / PCA) protein is Biosynthetic arginine decarboxylase.